Reading from the N-terminus, the 143-residue chain is Large ribosomal subunit protein uL16 (143 aa).

The protein belongs to the universal ribosomal protein uL16 family. In terms of assembly, part of the 50S ribosomal subunit.

Its function is as follows. Binds 23S rRNA and is also seen to make contacts with the A and possibly P site tRNAs. The chain is Large ribosomal subunit protein uL16 from Sphingopyxis alaskensis (strain DSM 13593 / LMG 18877 / RB2256) (Sphingomonas alaskensis).